The sequence spans 265 residues: Transcriptional activator TAF-1 (265 aa).

Disordered regions lie at residues alanine 1–alanine 133 and threonine 167–glutamate 218. Residues alanine 35–serine 46 are compositionally biased toward low complexity. 2 stretches are compositionally biased toward basic and acidic residues: residues arginine 103–serine 115 and asparagine 191–arginine 209. The 64-residue stretch at glutamate 194–leucine 257 folds into the bZIP domain. The interval lysine 196–lysine 215 is basic motif. A leucine-zipper region spans residues leucine 222–leucine 257.

It belongs to the bZIP family. In terms of tissue distribution, present mainly in roots. Barely detectable in stems and leaves.

Its subcellular location is the nucleus. Functionally, trans-activator of a beta-glucuronidase (GUS) reporter gene. Binds to a G-box-related element, (5'-GCAACGTGGC-3'). Also binds to the HEX-motif of wheat histone H3 promoter. The chain is Transcriptional activator TAF-1 (TAF1) from Nicotiana tabacum (Common tobacco).